The chain runs to 74 residues: Omega-filistatoxin-Kh1a (74 aa).

In terms of processing, contains 6 disulfide bonds. Expressed by the venom gland.

It localises to the secreted. Its function is as follows. Potently blocks vertebrate calcium channels Cav1 and Cav2. Is the most active on Cav2.2/CACNA1B (from HEK) (IC(50)=2.3 nM), followed by Cav2.1/CACNA1A (IC(50)=4.3 nM), Cav2.2/CACNA1B (from oocyte) (IC(50)=14.4 nM), Cav1.2/CACNA1C (IC(50)=26.8 nM), and Cav2.3/CACNA1E (IC(50)=96.4 nM). This Kukulcania hibernalis (Southern house spider) protein is Omega-filistatoxin-Kh1a.